Here is a 343-residue protein sequence, read N- to C-terminus: ATP-dependent (S)-NAD(P)H-hydrate dehydratase (343 aa).

The transit peptide at methionine 1–alanine 42 directs the protein to the mitochondrion. A YjeF C-terminal domain is found at leucine 49 to leucine 340. The residue at position 63 (lysine 63) is an N6-acetyllysine. Tyrosine 81 carries the post-translational modification Phosphotyrosine. (6S)-NADPHX is bound by residues glycine 149 and asparagine 202–arginine 208. A Phosphoserine modification is found at serine 216. ATP-binding positions include lysine 242–aspartate 246 and glycine 261–glycine 270. Residue aspartate 271 coordinates (6S)-NADPHX.

The protein belongs to the NnrD/CARKD family. Mg(2+) is required as a cofactor.

The protein resides in the mitochondrion. The catalysed reaction is (6S)-NADHX + ATP = ADP + phosphate + NADH + H(+). It carries out the reaction (6S)-NADPHX + ATP = ADP + phosphate + NADPH + H(+). Functionally, catalyzes the dehydration of the S-form of NAD(P)HX at the expense of ATP, which is converted to ADP. Together with NAD(P)HX epimerase, which catalyzes the epimerization of the S- and R-forms, the enzyme allows the repair of both epimers of NAD(P)HX, a damaged form of NAD(P)H that is a result of enzymatic or heat-dependent hydration. The polypeptide is ATP-dependent (S)-NAD(P)H-hydrate dehydratase (Mus musculus (Mouse)).